We begin with the raw amino-acid sequence, 81 residues long: uncharacterized protein (81 aa).

As to expression, expressed in fetal brain.

This is an uncharacterized protein from Homo sapiens (Human).